Consider the following 251-residue polypeptide: MLPGFGAQTVSPFPNPPEYASAYTSDRINNGSAPPPPHPLTEFKVYGEEYRLEDDVIAPLKNAGVAELYKNKNNWKTEMKKLNRSAIVAFFDLVEILIRAPDHPMREEKMVDLHTIFINMHHLINEFRPVQARDSVRILQERQIEELSDICKDFKKYLRDGREVVDDQFQMIRGKLPAPPQPSELTRVKLQDGVLHMLQETEASDDVEMKEEEGSEYSKKKARLELLSREDGPPSVVHLLARQFHDISLKK.

Residues 1 to 38 (MLPGFGAQTVSPFPNPPEYASAYTSDRINNGSAPPPPH) are disordered. Positions 22–32 (AYTSDRINNGS) are enriched in polar residues.

It belongs to the Mediator complex subunit 7 family. Component of the Mediator complex. Interacts with mdt-10 and mdt-21. Interacts with RNA polymerase II.

The protein resides in the nucleus. Functionally, component of the Mediator complex, a coactivator involved in the regulated transcription of nearly all RNA polymerase II-dependent genes. Mediator functions as a bridge to convey information from gene-specific regulatory proteins to the basal RNA polymerase II transcription machinery. Mediator is recruited to promoters by direct interactions with regulatory proteins and serves as a scaffold for the assembly of a functional preinitiation complex with RNA polymerase II and the general transcription factors. Required for germ cell development and gonadal growth. The polypeptide is Mediator of RNA polymerase II transcription subunit 7 (let-49) (Caenorhabditis elegans).